Here is a 343-residue protein sequence, read N- to C-terminus: Phosphoribosylformylglycinamidine cyclo-ligase (343 aa).

The protein belongs to the AIR synthase family.

Its subcellular location is the cytoplasm. It carries out the reaction 2-formamido-N(1)-(5-O-phospho-beta-D-ribosyl)acetamidine + ATP = 5-amino-1-(5-phospho-beta-D-ribosyl)imidazole + ADP + phosphate + H(+). Its pathway is purine metabolism; IMP biosynthesis via de novo pathway; 5-amino-1-(5-phospho-D-ribosyl)imidazole from N(2)-formyl-N(1)-(5-phospho-D-ribosyl)glycinamide: step 2/2. The protein is Phosphoribosylformylglycinamidine cyclo-ligase of Parasynechococcus marenigrum (strain WH8102).